A 357-amino-acid polypeptide reads, in one-letter code: Peptide chain release factor 1 (357 aa).

An N5-methylglutamine modification is found at Gln-236.

This sequence belongs to the prokaryotic/mitochondrial release factor family. In terms of processing, methylated by PrmC. Methylation increases the termination efficiency of RF1.

Its subcellular location is the cytoplasm. Its function is as follows. Peptide chain release factor 1 directs the termination of translation in response to the peptide chain termination codons UAG and UAA. This chain is Peptide chain release factor 1, found in Mycobacterium sp. (strain JLS).